The primary structure comprises 423 residues: UDP-N-acetylglucosamine 1-carboxyvinyltransferase 2 (423 aa).

Residue 23-24 (KN) participates in phosphoenolpyruvate binding. R96 contacts UDP-N-acetyl-alpha-D-glucosamine. The active-site Proton donor is the C120. C120 bears the 2-(S-cysteinyl)pyruvic acid O-phosphothioketal mark. UDP-N-acetyl-alpha-D-glucosamine contacts are provided by residues 125–129 (RPIDL), D309, and V331.

Belongs to the EPSP synthase family. MurA subfamily.

It is found in the cytoplasm. The catalysed reaction is phosphoenolpyruvate + UDP-N-acetyl-alpha-D-glucosamine = UDP-N-acetyl-3-O-(1-carboxyvinyl)-alpha-D-glucosamine + phosphate. Its pathway is cell wall biogenesis; peptidoglycan biosynthesis. Cell wall formation. Adds enolpyruvyl to UDP-N-acetylglucosamine. The sequence is that of UDP-N-acetylglucosamine 1-carboxyvinyltransferase 2 from Streptococcus agalactiae serotype III (strain NEM316).